Here is a 681-residue protein sequence, read N- to C-terminus: Probable L-type lectin-domain containing receptor kinase S.7 (681 aa).

Positions methionine 1 to serine 21 are cleaved as a signal peptide. Topologically, residues lysine 22–asparagine 305 are extracellular. The legume-lectin like stretch occupies residues asparagine 30–lysine 265. Residues asparagine 32, asparagine 42, asparagine 86, asparagine 121, asparagine 135, asparagine 261, and asparagine 281 are each glycosylated (N-linked (GlcNAc...) asparagine). A helical membrane pass occupies residues leucine 306–glycine 326. Over tyrosine 327–serine 681 the chain is Cytoplasmic. The Protein kinase domain maps to phenylalanine 365 to isoleucine 643. Residues isoleucine 371–valine 379 and lysine 394 each bind ATP. Aspartate 493 serves as the catalytic Proton acceptor.

In the C-terminal section; belongs to the protein kinase superfamily. Ser/Thr protein kinase family. It in the N-terminal section; belongs to the leguminous lectin family.

The protein localises to the cell membrane. It catalyses the reaction L-seryl-[protein] + ATP = O-phospho-L-seryl-[protein] + ADP + H(+). The enzyme catalyses L-threonyl-[protein] + ATP = O-phospho-L-threonyl-[protein] + ADP + H(+). In terms of biological role, involved in resistance response to the pathogenic oomycetes Phytophthora infestans and Phytophthora capsici. In Arabidopsis thaliana (Mouse-ear cress), this protein is Probable L-type lectin-domain containing receptor kinase S.7.